The primary structure comprises 284 residues: 2-dehydro-3-deoxyphosphooctonate aldolase (284 aa).

The protein belongs to the KdsA family.

It is found in the cytoplasm. The enzyme catalyses D-arabinose 5-phosphate + phosphoenolpyruvate + H2O = 3-deoxy-alpha-D-manno-2-octulosonate-8-phosphate + phosphate. The protein operates within carbohydrate biosynthesis; 3-deoxy-D-manno-octulosonate biosynthesis; 3-deoxy-D-manno-octulosonate from D-ribulose 5-phosphate: step 2/3. It participates in bacterial outer membrane biogenesis; lipopolysaccharide biosynthesis. The sequence is that of 2-dehydro-3-deoxyphosphooctonate aldolase from Erwinia tasmaniensis (strain DSM 17950 / CFBP 7177 / CIP 109463 / NCPPB 4357 / Et1/99).